Reading from the N-terminus, the 374-residue chain is Methylthioribose-1-phosphate isomerase (374 aa).

The active-site Proton donor is aspartate 256.

This sequence belongs to the eIF-2B alpha/beta/delta subunits family. MtnA subfamily.

It is found in the cytoplasm. Its subcellular location is the nucleus. It catalyses the reaction 5-(methylsulfanyl)-alpha-D-ribose 1-phosphate = 5-(methylsulfanyl)-D-ribulose 1-phosphate. The protein operates within amino-acid biosynthesis; L-methionine biosynthesis via salvage pathway; L-methionine from S-methyl-5-thio-alpha-D-ribose 1-phosphate: step 1/6. Functionally, catalyzes the interconversion of methylthioribose-1-phosphate (MTR-1-P) into methylthioribulose-1-phosphate (MTRu-1-P). The polypeptide is Methylthioribose-1-phosphate isomerase (Leishmania braziliensis).